The sequence spans 275 residues: Lectin (275 aa).

The N-terminal stretch at Met-1–Ser-30 is a signal peptide. D-glucose-binding residues include Asp-111 and Gly-129. Mn(2+)-binding residues include Glu-149 and Asp-151. Positions 151, 153, 155, and 159 each coordinate Ca(2+). Mn(2+) contacts are provided by Asp-159 and His-166. A propeptide spanning residues Asn-211–Asn-217 is cleaved from the precursor. Residues Gly-246 and Ala-247 each coordinate D-glucose. A propeptide spanning residues Lys-270–Ala-275 is cleaved from the precursor.

It belongs to the leguminous lectin family. In terms of assembly, heterotetramer of two alpha and two beta chains. Post-translationally, the mature form consists of two chains, alpha and beta, produced by cleavage of the immature protein. These remain cleaved, yet fold together to form one subunit.

Functionally, D-mannose specific lectin. The protein is Lectin of Lens culinaris subsp. tomentosus (Lentil).